The sequence spans 438 residues: Na(+)/H(+) antiporter NhaA (438 aa).

11 helical membrane-spanning segments follow: residues 23–43 (FGGI…NSFL), 62–82 (FFIG…LFFL), 104–124 (SFPV…YFFL), 133–153 (GFGI…MLLG), 162–182 (VFLI…IALF), 185–205 (TNLK…LAVL), 221–241 (VLLW…AVIL), 302–322 (FLAP…NAGV), 337–357 (LGVI…ITFI), 372–392 (WWHI…SMFI), and 410–430 (IAIL…LFAL).

It belongs to the NhaA Na(+)/H(+) (TC 2.A.33) antiporter family.

The protein localises to the cell inner membrane. The catalysed reaction is Na(+)(in) + 2 H(+)(out) = Na(+)(out) + 2 H(+)(in). In terms of biological role, na(+)/H(+) antiporter that extrudes sodium in exchange for external protons. The protein is Na(+)/H(+) antiporter NhaA of Helicobacter pylori (strain HPAG1).